Consider the following 263-residue polypeptide: MVLKSVFRSTVLGLRTWSVFSVARQSKTTLPAFSQAQCSSYTNWTFSRHFKGDETLLNQPVRQYARPSRKKQEFPSQLEDLKTSMLKHEYASVPLAQSVDDVVKKLLTLEFANHSEKLRLKEEQLIAKVQRDENDRSSTEVKVAILTARIRNFQEHLHKHPKDKANKRWMLMTIDKRKKLLKFLRRTRYDSFEKVCKELGITYTFPPEYYRRVTRRWLAKKAFCNKVFKEVQRLKAAEREKQKAEEAERKKSSSSTNPQETAA.

Residues Met-1–Lys-70 constitute a mitochondrion transit peptide. Residues Glu-238–Lys-251 are compositionally biased toward basic and acidic residues. Residues Glu-238–Ala-263 form a disordered region.

This sequence belongs to the universal ribosomal protein uS15 family. In terms of assembly, component of the mitochondrial ribosome small subunit (28S) which comprises a 12S rRNA and about 30 distinct proteins.

Its subcellular location is the mitochondrion. In Danio rerio (Zebrafish), this protein is Small ribosomal subunit protein uS15m (mrps15).